A 354-amino-acid polypeptide reads, in one-letter code: GTPase Obg (354 aa).

One can recognise an Obg domain in the interval 1-159; that stretch reads MKFLDQCKIY…LWVWLRLKLI (159 aa). One can recognise an OBG-type G domain in the interval 160-328; that stretch reads ADVGLVGLPN…LLRAAFTQVR (169 aa). Residues 166–173, 191–195, 213–216, 280–283, and 309–311 contribute to the GTP site; these read GLPNAGKS, FTTLT, DIPG, NKVD, and SGV. Positions 173 and 193 each coordinate Mg(2+). The disordered stretch occupies residues 333 to 354; the sequence is ETPAEAAIDEAPEEETPGGWQP. Residues 339–348 show a composition bias toward acidic residues; the sequence is AIDEAPEEET.

Belongs to the TRAFAC class OBG-HflX-like GTPase superfamily. OBG GTPase family. As to quaternary structure, monomer. Mg(2+) is required as a cofactor.

Its subcellular location is the cytoplasm. An essential GTPase which binds GTP, GDP and possibly (p)ppGpp with moderate affinity, with high nucleotide exchange rates and a fairly low GTP hydrolysis rate. Plays a role in control of the cell cycle, stress response, ribosome biogenesis and in those bacteria that undergo differentiation, in morphogenesis control. In Caulobacter sp. (strain K31), this protein is GTPase Obg.